A 142-amino-acid chain; its full sequence is Large ribosomal subunit protein uL13 (142 aa).

This sequence belongs to the universal ribosomal protein uL13 family. Part of the 50S ribosomal subunit.

In terms of biological role, this protein is one of the early assembly proteins of the 50S ribosomal subunit, although it is not seen to bind rRNA by itself. It is important during the early stages of 50S assembly. The sequence is that of Large ribosomal subunit protein uL13 from Vibrio atlanticus (strain LGP32) (Vibrio splendidus (strain Mel32)).